We begin with the raw amino-acid sequence, 205 residues long: DNA-directed RNA polymerase RPB5 homolog (205 aa).

This sequence belongs to the archaeal RpoH/eukaryotic RPB5 RNA polymerase subunit family. Part of the viral DNA-directed RNA polymerase that consists of 8 polII-like subunits (RPB1, RPB2, RPB3, RPB5, RPB6, RPB7, RPB9, RPB10), a capping enzyme and a termination factor.

The protein resides in the host cytoplasm. The protein localises to the virion. Its function is as follows. Component of the DNA-directed RNA polymerase (RNAP) that catalyzes the transcription in the cytoplasm of viral DNA into RNA using the four ribonucleoside triphosphates as substrates. This Ornithodoros (relapsing fever ticks) protein is DNA-directed RNA polymerase RPB5 homolog.